Here is a 213-residue protein sequence, read N- to C-terminus: Thymidylate kinase (213 aa).

Residue glycine 10–threonine 17 coordinates ATP.

It belongs to the thymidylate kinase family.

It catalyses the reaction dTMP + ATP = dTDP + ADP. Phosphorylation of dTMP to form dTDP in both de novo and salvage pathways of dTTP synthesis. The polypeptide is Thymidylate kinase (Shigella boydii serotype 18 (strain CDC 3083-94 / BS512)).